The primary structure comprises 2646 residues: Probable inactive serine/threonine-protein kinase roco10 (2646 aa).

Disordered regions lie at residues 28–122 (LNYS…LSGG), 138–168 (NIPI…KDKD), 205–248 (PLFI…VSPS), 281–457 (QQQR…VKQA), 477–516 (MSKL…HTSP), 605–656 (TSPN…PHQY), and 882–907 (QSSS…STPS). The segment covering 46 to 56 (PQQNLLENDTL) has biased composition (polar residues). Low complexity-rich tracts occupy residues 78 to 115 (IITT…TSPS), 147 to 161 (SPTS…NNNN), and 215 to 228 (SRNN…GGNK). A compositionally biased stretch (polar residues) spans 235–248 (KISSTSAAGDVSPS). Low complexity-rich tracts occupy residues 285–297 (NGNN…NNNN) and 325–334 (NNNNNNNNNN). The span at 335 to 345 (KQPQHPMNGNH) shows a compositional bias: polar residues. Low complexity predominate over residues 346–394 (SPSNGTSGSLSMSGSGIDNGGNNNNNSNTHGSSSNQSSGVTSPIIQSTS). 2 stretches are compositionally biased toward polar residues: residues 402–416 (GLNS…SSPT) and 428–443 (TSAS…PLMN). Composition is skewed to low complexity over residues 444-454 (STGVSSSSSGV), 491-516 (PSSP…HTSP), 605-627 (TSPN…NSSP), 634-651 (QQQQ…NTNT), and 883-907 (SSSS…STPS). The 223-residue stretch at 585–807 (SSISPISTAA…MFIQQADILF (223 aa)) folds into the Rho-GAP domain. LRR repeat units follow at residues 968–987 (QKLD…IKQL), 989–1011 (DLQE…ARLT), 1012–1033 (SLRT…MADF), 1040–1061 (NLEN…YTWL), 1062–1083 (KLKT…IFQI), 1085–1108 (TLEV…CTST), 1109–1131 (KLRS…INLV), 1132–1154 (ELQV…QKLT), 1155–1176 (SLTE…LLLL), 1178–1199 (NLKK…IHRM), 1201–1222 (SLIE…IVAL), 1224–1247 (KLNS…YIQK), 1248–1270 (GKEG…YRTR), 1271–1298 (IIML…SFSS), and 1303–1327 (LPSL…ILDI). Positions 1262-1474 (TNVPCYRTRI…RDIKQMIAKN (213 aa)) constitute a Roc domain. Disordered stretches follow at residues 1293 to 1317 (KSSF…SNNS), 1651 to 1670 (NNNN…SRSM), and 1957 to 2026 (NNSS…KEKE). Residues 1651–1669 (NNNNSNGNNVGRGRSGSRS) show a composition bias toward low complexity. Over residues 1966 to 1975 (PIASSRSNPK) the composition is skewed to polar residues. Low complexity predominate over residues 1983-1996 (NLIQSNNNDNNNSL). The span at 1997–2026 (SKKDLKELAKQNKEKEKEKEKDKDKEKEKE) shows a compositional bias: basic and acidic residues. A Protein kinase domain is found at 2049–2342 (FSICHFIKEI…PSKIISQLYT (294 aa)). ATP is bound by residues 2055–2063 (IKEIDYREI) and Lys2094. One can recognise an RGS domain in the interval 2412–2536 (MVVLNNKQST…FTVPTTNKNG (125 aa)).

Belongs to the protein kinase superfamily. TKL Ser/Thr protein kinase family. ROCO subfamily.

The protein is Probable inactive serine/threonine-protein kinase roco10 (roco10) of Dictyostelium discoideum (Social amoeba).